The chain runs to 175 residues: Gamma-crystallin B (175 aa).

Beta/gamma crystallin 'Greek key' domains lie at 2–40 and 41–83; these read GKIT…RVDS and GCWM…RLIP. The tract at residues 84–88 is connecting peptide; the sequence is QHSGT. Beta/gamma crystallin 'Greek key' domains lie at 89 to 129 and 130 to 172; these read FRMR…NVLD and GCWV…RRVM.

Belongs to the beta/gamma-crystallin family. Monomer.

Functionally, crystallins are the dominant structural components of the vertebrate eye lens. This is Gamma-crystallin B (CRYGB) from Canis lupus familiaris (Dog).